A 531-amino-acid chain; its full sequence is Probable rhamnogalacturonate lyase A (531 aa).

A signal peptide spans 1-20 (MLSKALFFSSLPLWAKVASA). Disulfide bonds link Cys50-Cys93 and Cys184-Cys193. Asn351 carries an N-linked (GlcNAc...) asparagine glycan.

It belongs to the polysaccharide lyase 4 family.

The protein localises to the secreted. It catalyses the reaction Endotype eliminative cleavage of L-alpha-rhamnopyranosyl-(1-&gt;4)-alpha-D-galactopyranosyluronic acid bonds of rhamnogalacturonan I domains in ramified hairy regions of pectin leaving L-rhamnopyranose at the reducing end and 4-deoxy-4,5-unsaturated D-galactopyranosyluronic acid at the non-reducing end.. Functionally, pectinolytic enzymes consist of four classes of enzymes: pectin lyase, polygalacturonase, pectin methylesterase and rhamnogalacturonase. Degrades the rhamnogalacturonan I (RG-I) backbone of pectin. The polypeptide is Probable rhamnogalacturonate lyase A (rglA) (Aspergillus terreus (strain NIH 2624 / FGSC A1156)).